The sequence spans 220 residues: uncharacterized protein (220 aa).

Belongs to the DadA oxidoreductase family. Requires FAD as cofactor.

This is an uncharacterized protein from Halorhodospira halophila (Ectothiorhodospira halophila).